A 511-amino-acid polypeptide reads, in one-letter code: Protein phosphatase 2C 7 (511 aa).

The N-terminal stretch at 1–19 (MEEISPAVALTLGLANTMC) is a signal peptide. The PPM-type phosphatase domain maps to 188-501 (LWGTISICGG…DNISIIVIDL (314 aa)). Mn(2+) is bound by residues Asp-242, Gly-243, Asp-432, and Asp-492.

This sequence belongs to the PP2C family. Interacts with PYL13. Mg(2+) is required as a cofactor. It depends on Mn(2+) as a cofactor. In terms of tissue distribution, expressed in seeds.

It catalyses the reaction O-phospho-L-seryl-[protein] + H2O = L-seryl-[protein] + phosphate. The catalysed reaction is O-phospho-L-threonyl-[protein] + H2O = L-threonyl-[protein] + phosphate. In terms of biological role, key component and repressor of the abscisic acid (ABA) signaling pathway that regulates numerous ABA responses, such as stomatal closure, seed germination and inhibition of vegetative growth. In Arabidopsis thaliana (Mouse-ear cress), this protein is Protein phosphatase 2C 7 (HAB2).